The sequence spans 136 residues: UPF0310 protein HH_1062 (136 aa).

The protein belongs to the UPF0310 family.

This chain is UPF0310 protein HH_1062, found in Helicobacter hepaticus (strain ATCC 51449 / 3B1).